The primary structure comprises 509 residues: MDIRAAEISAILKDQIKNFGQEAEVTEVGQVLSVGDGIARVYGLDNVQAGEMVEFENGTRGMALNLETDNVGVVIFGADREIKEGQTVKRTRAIVDAPVGKGLLGRVVDALGNPIDGKGPIQFTERKRVDVKAPGIIPRKSVNEPMATGLKAIDALIPIGRGQRELIIGDRQTGKTAIALDTILNQKPLNAQPDEKIKLYCVYVAVGQKRSTVAQFVKVLEEQGALEYSIVVAATASDPAPMQYLAPFTGCTMGEYFRDNGMHAVIIYDDLSKQAVAYRQMSLLLRRPPGREAYPGDVFYLHSRLLERAAKLNETQGAGSLTALPVIETQANDVSAYIPTNVISITDGQIFLETDLFFQGIRPAVNVGLSVSRVGSSAQTKAMKKVAGKIKGELAQYREMAAFAQFGSDLDAATQRLLNRGSRLTELLKQPQFSPLKMEEQVCVIWAGTNGFLDGLPLNKVRAFEDGLLSLLRGKHADLLNTIRDTRDLSDDSAAKLKAAVEGFAKTFS.

Residue 169–176 (GDRQTGKT) participates in ATP binding.

It belongs to the ATPase alpha/beta chains family. In terms of assembly, F-type ATPases have 2 components, CF(1) - the catalytic core - and CF(0) - the membrane proton channel. CF(1) has five subunits: alpha(3), beta(3), gamma(1), delta(1), epsilon(1). CF(0) has four main subunits: a(1), b(1), b'(1) and c(9-12).

Its subcellular location is the cell inner membrane. It catalyses the reaction ATP + H2O + 4 H(+)(in) = ADP + phosphate + 5 H(+)(out). Its function is as follows. Produces ATP from ADP in the presence of a proton gradient across the membrane. The alpha chain is a regulatory subunit. The polypeptide is ATP synthase subunit alpha (Bradyrhizobium sp. (strain ORS 278)).